Reading from the N-terminus, the 494-residue chain is Aspartyl/glutamyl-tRNA(Asn/Gln) amidotransferase subunit B (494 aa).

The protein belongs to the GatB/GatE family. GatB subfamily. In terms of assembly, heterotrimer of A, B and C subunits.

The catalysed reaction is L-glutamyl-tRNA(Gln) + L-glutamine + ATP + H2O = L-glutaminyl-tRNA(Gln) + L-glutamate + ADP + phosphate + H(+). It catalyses the reaction L-aspartyl-tRNA(Asn) + L-glutamine + ATP + H2O = L-asparaginyl-tRNA(Asn) + L-glutamate + ADP + phosphate + 2 H(+). Allows the formation of correctly charged Asn-tRNA(Asn) or Gln-tRNA(Gln) through the transamidation of misacylated Asp-tRNA(Asn) or Glu-tRNA(Gln) in organisms which lack either or both of asparaginyl-tRNA or glutaminyl-tRNA synthetases. The reaction takes place in the presence of glutamine and ATP through an activated phospho-Asp-tRNA(Asn) or phospho-Glu-tRNA(Gln). The chain is Aspartyl/glutamyl-tRNA(Asn/Gln) amidotransferase subunit B from Synechococcus sp. (strain ATCC 27144 / PCC 6301 / SAUG 1402/1) (Anacystis nidulans).